Consider the following 218-residue polypeptide: Ribonuclease S-7 (218 aa).

The N-terminal stretch at 1–22 (MLNSPLTSVLFVLLFVLSPIYG) is a signal peptide. Glutamine 32 contributes to the RNA binding site. Cysteine 38 and cysteine 43 are joined by a disulfide. An N-linked (GlcNAc...) asparagine glycan is attached at asparagine 49. Position 53 (histidine 53) interacts with RNA. Histidine 53 serves as the catalytic Proton donor. An N-linked (GlcNAc...) asparagine glycan is attached at asparagine 59. The cysteines at positions 67 and 116 are disulfide-linked. RNA contacts are provided by residues 91-92 (DL), phenylalanine 105, 108-109 (HE), and 112-113 (KH). Glutamate 109 is an active-site residue. Histidine 113 functions as the Proton acceptor in the catalytic mechanism. N-linked (GlcNAc...) asparagine glycosylation is present at asparagine 162. Disulfide bonds link cysteine 177/cysteine 207 and cysteine 190/cysteine 201.

It belongs to the RNase T2 family.

The protein localises to the secreted. It is found in the extracellular space. The catalysed reaction is a ribonucleotidyl-ribonucleotide-RNA + H2O = a 3'-end 3'-phospho-ribonucleotide-RNA + a 5'-end dephospho-ribonucleoside-RNA + H(+). Its function is as follows. Self-incompatibility (SI) is the inherited ability of a flowering plant to prevent self-fertilization by discriminating between self and non-self pollen during pollination. In many species of the Solanaceae, self-incompatibility is controlled by the single, multiallelic locus S. This stylar glycoprotein is associated with expression of self-incompatibility in potato. The sequence is that of Ribonuclease S-7 from Nicotiana alata (Winged tobacco).